A 414-amino-acid chain; its full sequence is Putative F-box/kelch-repeat protein At1g20940 (414 aa).

In terms of domain architecture, F-box spans 13–65 (SSIINDLPLDLLDEILFRLEPKSMAMMRCTNNSIKSYLSDPRFGPEYPSWVRP). Kelch repeat units lie at residues 281–328 (LTLI…MYDG) and 331–378 (LVVR…KLTP).

As to quaternary structure, interacts with DEK3.

Its pathway is protein modification; protein ubiquitination. Functionally, probable component of an E3 ubiquitin ligase complex. The protein is Putative F-box/kelch-repeat protein At1g20940 of Arabidopsis thaliana (Mouse-ear cress).